The following is a 277-amino-acid chain: Digeranylgeranylglyceryl phosphate synthase (277 aa).

A run of 7 helical transmembrane segments spans residues 13 to 33 (PGNA…AGGL), 40 to 60 (AFAV…NDYF), 89 to 109 (VALF…AIAI), 143 to 163 (FLYG…LFAL), 199 to 219 (RSLY…PLPY), 220 to 240 (LLGL…CGLA), and 256 to 276 (WLKA…LAVV).

This sequence belongs to the UbiA prenyltransferase family. DGGGP synthase subfamily. Mg(2+) serves as cofactor.

Its subcellular location is the cell membrane. The enzyme catalyses sn-3-O-(geranylgeranyl)glycerol 1-phosphate + (2E,6E,10E)-geranylgeranyl diphosphate = 2,3-bis-O-(geranylgeranyl)-sn-glycerol 1-phosphate + diphosphate. It functions in the pathway membrane lipid metabolism; glycerophospholipid metabolism. Prenyltransferase that catalyzes the transfer of the geranylgeranyl moiety of geranylgeranyl diphosphate (GGPP) to the C2 hydroxyl of (S)-3-O-geranylgeranylglyceryl phosphate (GGGP). This reaction is the second ether-bond-formation step in the biosynthesis of archaeal membrane lipids. The protein is Digeranylgeranylglyceryl phosphate synthase of Natronomonas pharaonis (strain ATCC 35678 / DSM 2160 / CIP 103997 / JCM 8858 / NBRC 14720 / NCIMB 2260 / Gabara) (Halobacterium pharaonis).